Consider the following 52-residue polypeptide: Ovomucoid (52 aa).

Positions 2–52 constitute a Kazal-like domain; it reads VDCSEYPKPACPKDYRPVCGSDNKTYGNKCNFCNAVVESNGTLTLNRFGKC. Cystine bridges form between cysteine 4–cysteine 34, cysteine 12–cysteine 31, and cysteine 20–cysteine 52. An N-linked (GlcNAc...) asparagine glycan is attached at asparagine 41.

Its subcellular location is the secreted. In Coturnix delegorguei (Harlequin quail), this protein is Ovomucoid.